The chain runs to 539 residues: Putative cysteine ligase BshC (539 aa).

The stretch at 455–475 (LQKNAAFIQDQLLFLERTVTK) forms a coiled coil.

The protein belongs to the BshC family.

In terms of biological role, involved in bacillithiol (BSH) biosynthesis. May catalyze the last step of the pathway, the addition of cysteine to glucosamine malate (GlcN-Mal) to generate BSH. This chain is Putative cysteine ligase BshC, found in Bacillus velezensis (strain DSM 23117 / BGSC 10A6 / LMG 26770 / FZB42) (Bacillus amyloliquefaciens subsp. plantarum).